The primary structure comprises 213 residues: MDPALAAQMSEAVAEKMLQYRRDTAGWKICREGNGVSVSWRPSVEFPGNLYRGEGIVYGTLEEVWDCVKPAVGGLRVKWDENVTGFEIIQSITDTLCVSRTSTPSAAMKLISPRDFVDLVLVKRYEDGTISSNATHVEHPLCPPKPGFVRGFNHPCGCFCEPLPGEPTKTNLVTFFHTDLSGYLPQNVVDSFFPRSMTRFYANLQKAVKQFHE.

Residues 1–213 (MDPALAAQMS…LQKAVKQFHE (213 aa)) enclose the START domain.

Its function is as follows. May be involved in the intracellular transport of sterols or other lipids. May bind cholesterol or other sterols. This chain is StAR-related lipid transfer protein 5 (STARD5), found in Homo sapiens (Human).